Here is a 340-residue protein sequence, read N- to C-terminus: Heat-inducible transcription repressor HrcA (340 aa).

This sequence belongs to the HrcA family.

Its function is as follows. Negative regulator of class I heat shock genes (grpE-dnaK-dnaJ and groELS operons). Prevents heat-shock induction of these operons. In Burkholderia cenocepacia (strain HI2424), this protein is Heat-inducible transcription repressor HrcA.